A 290-amino-acid chain; its full sequence is tRNA(Ile)-lysidine synthase, chloroplastic (290 aa).

S33–S38 is a binding site for ATP.

This sequence belongs to the tRNA(Ile)-lysidine synthase family.

It localises to the plastid. The protein resides in the chloroplast. It carries out the reaction cytidine(34) in tRNA(Ile2) + L-lysine + ATP = lysidine(34) in tRNA(Ile2) + AMP + diphosphate + H(+). Its function is as follows. Ligates lysine onto the cytidine present at position 34 of the AUA codon-specific tRNA(Ile) that contains the anticodon CAU, in an ATP-dependent manner. Cytidine is converted to lysidine, thus changing the amino acid specificity of the tRNA from methionine to isoleucine. This Cyanidioschyzon merolae (strain NIES-3377 / 10D) (Unicellular red alga) protein is tRNA(Ile)-lysidine synthase, chloroplastic.